We begin with the raw amino-acid sequence, 484 residues long: Crt homolog 2 (484 aa).

The Cytoplasmic segment spans residues 1–57 (MSEEKLPLLSPLNENDIENDYKDENLKSDLDKLSNVKKQSIIQRFKDYLKNSISKQT). A helical membrane pass occupies residues 58–78 (ATVLVYVVLYILSGVINSLLL). The Vacuolar segment spans residues 79-94 (KKVMNVFTNYGFFLNQ). The helical transmembrane segment at 95–115 (LTNYGYVPIFGAIVLYKILFT) threads the bilayer. Topologically, residues 116–128 (NDIPKDTRSFPQW) are cytoplasmic. Residues 129–149 (KFVIMGALDAVTGYFVVIGGI) traverse the membrane as a helical segment. The Vacuolar segment spans residues 150-154 (KTTGP). A helical membrane pass occupies residues 155–175 (LQQLLNQSVIPFTMLLSFIFL). Topologically, residues 176–178 (KER) are cytoplasmic. A helical transmembrane segment spans residues 179-199 (YSLIQLGGALIIIGGVVVSLI). Over 200–210 (PSLTGGNTSGN) the chain is Vacuolar. An N-linked (GlcNAc...) asparagine glycan is attached at asparagine 206. A helical transmembrane segment spans residues 211–231 (MLFYNFFYLISMIPYAFSNVY). Residues 232-244 (KAIGFSTVEDMDV) lie on the Cytoplasmic side of the membrane. Residues 245 to 265 (WYLQYFDALYQSLVGTVLFPI) traverse the membrane as a helical segment. Residues 266–328 (NNWLPPPSDM…LGCDNCHGAW (63 aa)) are Vacuolar-facing. N-linked (GlcNAc...) asparagine glycosylation is present at asparagine 302. A helical transmembrane segment spans residues 329–349 (VVVLIYMAVNVLYNVFILLVL). Over 350–355 (KHAGAT) the chain is Cytoplasmic. The chain crosses the membrane as a helical span at residues 356–378 (VFSIANTLRLPLTNIAFSFKFIM). Over 379–382 (GSDS) the chain is Vacuolar. A helical transmembrane segment spans residues 383 to 403 (NPFSGLSVAGLCIILLGLGGY). Residues 404 to 484 (RVGSMIKQKK…RNQNSIYGDQ (81 aa)) are Cytoplasmic-facing.

The protein belongs to the CRT-like transporter family.

The protein resides in the vacuole membrane. Its function is as follows. Nutrient transporter. Involved in maintaining the osmotic homeostasis of the digestive vacuole. This chain is Crt homolog 2 (crtp2), found in Dictyostelium discoideum (Social amoeba).